A 241-amino-acid polypeptide reads, in one-letter code: Carboxysome assembly protein CcmN (241 aa).

Residues glycine 123 to alanine 206 are disordered. The span at glutamine 185 to serine 195 shows a compositional bias: polar residues. Residues threonine 196–alanine 206 show a composition bias toward low complexity. The Encapsulation peptide signature appears at valine 219–serine 241.

It belongs to the CcmN family. Interacts with full-length and the N-terminal 249 residues of CcmM; a probable CcmM-CcaA-CcmN complex can also be isolated. Interacts with CcmK.

The protein localises to the carboxysome. Functionally, required for carboxysome formation; the N-terminus interacts with CcmM which itself binds RuBisCO (ribulose bisphosphate carboxylase, rbcL-rbcS). May also contact shell protein CcmK to help assemble the carboxysome. In terms of biological role, beta-carboxysome assembly initiates when soluble RuBisCO is condensed into a liquid matrix in a pre-carboxysome by the RbcS-like domains of probably both forms of CcmM. CcmN interacts with the N-terminus of full-length CcmM, and then recruits the CcmK major shell protein via CcmN's encapsulation peptide. Shell formation requires CcmK proteins and CcmO. CcmL caps the otherwise elongated carboxysome. Once fully encapsulated carboxysomes are formed, they migrate within the cell probably via interactions with the cytoskeleton. The chain is Carboxysome assembly protein CcmN from Synechocystis sp. (strain ATCC 27184 / PCC 6803 / Kazusa).